Here is a 477-residue protein sequence, read N- to C-terminus: Angiotensinogen (477 aa).

The N-terminal stretch at 1–24 (MTPTGAGLKATIFCILTWVSLTAG) is a signal peptide. Residues cysteine 42 and cysteine 161 are joined by a disulfide bond. N-linked (GlcNAc...) asparagine glycosylation is found at asparagine 295 and asparagine 319.

This sequence belongs to the serpin family. In terms of processing, in response to low blood pressure, the enzyme renin/REN cleaves angiotensinogen to produce angiotensin-1. Angiotensin-1 is a substrate of ACE (angiotensin converting enzyme) that removes a dipeptide to yield the physiologically active peptide angiotensin-2. Angiotensin-1 and angiotensin-2 can be further processed to generate angiotensin-3, angiotensin-4. Angiotensin 1-9 is cleaved from angiotensin-1 by ACE2 and can be further processed by ACE to produce angiotensin 1-7, angiotensin 1-5 and angiotensin 1-4. Angiotensin 1-7 has also been proposed to be cleaved from angiotensin-2 by ACE2 or from angiotensin-1 by MME (neprilysin). The disulfide bond is labile. Angiotensinogen is present in the circulation in a near 40:60 ratio with the oxidized disulfide-bonded form, which preferentially interacts with receptor-bound renin.

The protein localises to the secreted. Essential component of the renin-angiotensin system (RAS), a potent regulator of blood pressure, body fluid and electrolyte homeostasis. Its function is as follows. Acts directly on vascular smooth muscle as a potent vasoconstrictor, affects cardiac contractility and heart rate through its action on the sympathetic nervous system, and alters renal sodium and water absorption through its ability to stimulate the zona glomerulosa cells of the adrenal cortex to synthesize and secrete aldosterone. Acts by binding to angiotensin receptors AGTR1 and AGTR2. Also binds the DEAR/FBXW7-AS1 receptor. Functionally, stimulates aldosterone release. In terms of biological role, is a ligand for the G-protein coupled receptor MAS1. Has vasodilator and antidiuretic effects. Has an antithrombotic effect that involves MAS1-mediated release of nitric oxide from platelets. The polypeptide is Angiotensinogen (Agt) (Rattus norvegicus (Rat)).